The sequence spans 125 residues: Large-conductance mechanosensitive channel (125 aa).

The next 2 helical transmembrane spans lie at 14 to 34 (VIDL…VQSL) and 67 to 87 (GSFL…FLIV).

Belongs to the MscL family. In terms of assembly, homopentamer.

Its subcellular location is the cell membrane. In terms of biological role, channel that opens in response to stretch forces in the membrane lipid bilayer. May participate in the regulation of osmotic pressure changes within the cell. This chain is Large-conductance mechanosensitive channel, found in Lactobacillus helveticus (strain DPC 4571).